The following is a 361-amino-acid chain: Peptide chain release factor 1 (361 aa).

Residue glutamine 237 is modified to N5-methylglutamine. Residues 287-297 (KQQKEQSDTRK) are compositionally biased toward basic and acidic residues. A disordered region spans residues 287–313 (KQQKEQSDTRKSLVGSGDRSERIRTYN).

Belongs to the prokaryotic/mitochondrial release factor family. In terms of processing, methylated by PrmC. Methylation increases the termination efficiency of RF1.

The protein localises to the cytoplasm. Peptide chain release factor 1 directs the termination of translation in response to the peptide chain termination codons UAG and UAA. This chain is Peptide chain release factor 1, found in Francisella tularensis subsp. tularensis (strain FSC 198).